Consider the following 188-residue polypeptide: Adrenodoxin, mitochondrial (188 aa).

A mitochondrion-targeting transit peptide spans Met-1 to Arg-64. At Ser-67 the chain carries Phosphoserine. The region spanning Asp-69–Val-175 is the 2Fe-2S ferredoxin-type domain. Lys-70 is modified (N6-acetyllysine; alternate). Residue Lys-70 is modified to N6-succinyllysine; alternate. The [2Fe-2S] cluster site is built by Cys-110, Cys-116, Cys-119, and Cys-156. Position 162 is an N6-succinyllysine (Lys-162). Residue Ser-181 is modified to Phosphoserine.

The protein belongs to the adrenodoxin/putidaredoxin family. Interacts with CYP11A1. Requires [2Fe-2S] cluster as cofactor. Found in all tissues, most abundant in adrenals, ovaries and testes.

The protein resides in the mitochondrion matrix. Functionally, essential for the synthesis of various steroid hormones. Participates in the reduction of mitochondrial cytochrome P450 for steroidogenesis. Transfers electrons from adrenodoxin reductase to CYP11A1, a cytochrome P450 that catalyzes cholesterol side-chain cleavage. Does not form a ternary complex with adrenodoxin reductase and CYP11A1 but shuttles between the two enzymes to transfer electrons. This chain is Adrenodoxin, mitochondrial (Fdx1), found in Rattus norvegicus (Rat).